The sequence spans 476 residues: Ubiquitin-conjugating enzyme E2 variant 3 (476 aa).

In terms of domain architecture, UEV spans 2 to 145 (EFSAETLRQQ…EEELPLYSLS (144 aa)). Residue 185–213 (GDMALACLLAVSAKGTAGKLLLLDPTDGE) coordinates NAD(+).

The protein in the N-terminal section; belongs to the ubiquitin-conjugating enzyme family. UEV subfamily. It in the C-terminal section; belongs to the LDH/MDH superfamily. In terms of assembly, homodimer.

Possible negative regulator of polyubiquitination. In Xenopus tropicalis (Western clawed frog), this protein is Ubiquitin-conjugating enzyme E2 variant 3 (uevld).